The chain runs to 278 residues: Maltodextrin transport system permease protein MdxG (278 aa).

6 helical membrane-spanning segments follow: residues 12–32 (ICTY…LLIT), 74–94 (TLVI…LAGY), 108–128 (LIFF…AFYV), 131–151 (MLIG…GGGI), 183–203 (IFAS…ALWA), and 242–262 (VALF…LFFF). Residues 71–263 (YSNTLVIALS…LPICVLFFFL (193 aa)) enclose the ABC transmembrane type-1 domain.

This sequence belongs to the binding-protein-dependent transport system permease family. MalFG subfamily. The complex is composed of two ATP-binding proteins (MsmX), two transmembrane proteins (MdxF and MdxG) and a solute-binding protein (MdxE).

The protein localises to the cell membrane. Its function is as follows. Part of the ABC transporter complex involved in maltodextrin import. Probably responsible for the translocation of the substrate across the membrane. This is Maltodextrin transport system permease protein MdxG (mdxG) from Bacillus subtilis (strain 168).